A 302-amino-acid polypeptide reads, in one-letter code: MASLQDIQRRISSTKKTRQITSAMQMVSTAKLSQIQRYGRGYQAYAARLEAVVEHLVAAHLFDNADAKHIPLIAQRPIRKTGILVVTSDRGLVGSYNANVIKQTNALMARLNLDTTNTAILAVGGNGADFYKKRGFEVILEHRGVSDVPSFNEIRSVVKTVTSLYESEVFDALHVVYNHFVNRLTSEYRDVQLLPLTGDTLVAMGGTEAHKAELDIQSAYEVEPDTTAVLNVVLPQFAQSLVYEAVLDAKTAEHAASSTAMKAATDNAKDLIGRLELQFNRARQAAITTEITEITGGMAALE.

It belongs to the ATPase gamma chain family. In terms of assembly, F-type ATPases have 2 components, CF(1) - the catalytic core - and CF(0) - the membrane proton channel. CF(1) has five subunits: alpha(3), beta(3), gamma(1), delta(1), epsilon(1). CF(0) has three main subunits: a, b and c.

The protein resides in the cell membrane. Its function is as follows. Produces ATP from ADP in the presence of a proton gradient across the membrane. The gamma chain is believed to be important in regulating ATPase activity and the flow of protons through the CF(0) complex. This is ATP synthase gamma chain from Leuconostoc citreum (strain KM20).